Reading from the N-terminus, the 230-residue chain is MSDNANREGRRAIVLLSGGLDSMVSGGIAREQGFALAALTIDYNQRHRVELEAAKRVAAALGVDRHVTLPLNLRAFGGSSLTDDIDVPKDGVMPGIPSTYVPARNTIFLSLALGFAEATGARDIFLGVNALDYSGYPDCRPEFIAAFQHLADLATKMGVEGQGFTIHAPLQHMTKADIAQEAARLGLDAGMSWSCYDPTPDGKHCGLCDSCRLRSKGFADAGLADPTVYA.

16-26 serves as a coordination point for ATP; the sequence is LSGGLDSMVSG. Zn(2+) is bound by residues C195, C205, C208, and C211.

Belongs to the QueC family. The cofactor is Zn(2+).

It catalyses the reaction 7-carboxy-7-deazaguanine + NH4(+) + ATP = 7-cyano-7-deazaguanine + ADP + phosphate + H2O + H(+). It participates in purine metabolism; 7-cyano-7-deazaguanine biosynthesis. Functionally, catalyzes the ATP-dependent conversion of 7-carboxy-7-deazaguanine (CDG) to 7-cyano-7-deazaguanine (preQ(0)). In Rhizorhabdus wittichii (strain DSM 6014 / CCUG 31198 / JCM 15750 / NBRC 105917 / EY 4224 / RW1) (Sphingomonas wittichii), this protein is 7-cyano-7-deazaguanine synthase.